The chain runs to 744 residues: Collagen alpha-1(VIII) chain (744 aa).

The signal sequence occupies residues 1–27 (MAVPPGPPQLLQVLLTISLGSIRLIQA). Positions 29-117 (AYYGIKPLPP…GKEIPLASLR (89 aa)) are nonhelical region (NC2). Residues 101–110 (KEAVPKKGKE) show a composition bias toward basic and acidic residues. Disordered stretches follow at residues 101 to 435 (KEAV…GLQG) and 478 to 584 (LLGP…QGEY). A triple-helical region region spans residues 118–571 (GEQGPRGEPG…PGPPGPPGPP (454 aa)). Over residues 128–137 (PRGPPGPPGL) the composition is skewed to pro residues. Positions 168 to 190 (KPGAMGMPGAKGEIGPKGEIGPM) are enriched in low complexity. Positions 203 to 217 (GLPGIGKPGGPGLPG) are enriched in gly residues. Positions 288–298 (KPGPPGEPGPQ) are enriched in pro residues. A compositionally biased stretch (gly residues) spans 328 to 337 (GFPGGKGEQG). A compositionally biased stretch (pro residues) spans 389–403 (PGEPGLPGIPGPMGP). Residues 411–420 (GPKGEGGIVG) show a composition bias toward gly residues. Low complexity-rich tracts occupy residues 478–506 (LLGP…TGPS) and 540–556 (LHGP…QGQP). A compositionally biased stretch (pro residues) spans 558-579 (LPGPPGPPGPPGPPAVMPPTPA). Positions 572-744 (AVMPPTPAPQ…SFSGYLLYPM (173 aa)) are nonhelical region (NC1). Residues 611–744 (PAYEMPAFTA…SFSGYLLYPM (134 aa)) form the C1q domain.

As to quaternary structure, homotrimers, or heterotrimers in association with alpha 2(VIII) type collagens. Four homotrimers can form a tetrahedron stabilized by central interacting C-terminal NC1 trimers. Prolines at the third position of the tripeptide repeating unit (G-X-Y) are hydroxylated in some or all of the chains. In terms of processing, proteolytically cleaved by neutrophil elastase, in vitro. Proteolytic processing produces the C-terminal NC1 domain fragment, vastatin.

It is found in the secreted. Its subcellular location is the extracellular space. It localises to the extracellular matrix. The protein localises to the basement membrane. Macromolecular component of the subendothelium. Major component of the Descemet's membrane (basement membrane) of corneal endothelial cells. Also a component of the endothelia of blood vessels. Necessary for migration and proliferation of vascular smooth muscle cells and thus, has a potential role in the maintenance of vessel wall integrity and structure, in particular in atherogenesis. Its function is as follows. Vastatin, the C-terminal fragment comprising the NC1 domain, inhibits aortic endothelial cell proliferation and causes cell apoptosis. The polypeptide is Collagen alpha-1(VIII) chain (COL8A1) (Oryctolagus cuniculus (Rabbit)).